The primary structure comprises 742 residues: Probable LRR receptor-like serine/threonine-protein kinase At2g02780 (742 aa).

The signal sequence occupies residues 1-25 (MQISLQIHLSSFTFLLLIFLLPVLS). The Extracellular portion of the chain corresponds to 26–354 (ESQVASSESQ…KDSARIKLGL (329 aa)). LRR repeat units follow at residues 74 to 96 (HGHV…SFHK), 104 to 128 (LSSL…IITK), 130 to 154 (SPSL…IVSL), 156 to 177 (NLKS…DLRG), 178 to 204 (LSNL…KLTT), 206 to 223 (SLKN…IKKL), 224 to 247 (NNLQ…LFSI), 249 to 271 (SLQI…SCTS), and 273 to 294 (KIIT…CYSS). Asn85 carries an N-linked (GlcNAc...) asparagine glycan. N-linked (GlcNAc...) asparagine glycosylation is present at Asn137. An N-linked (GlcNAc...) asparagine glycan is attached at Asn209. N-linked (GlcNAc...) asparagine glycosylation occurs at Asn266. An N-linked (GlcNAc...) asparagine glycan is attached at Asn299. The helical transmembrane segment at 355 to 375 (VILIIIGVIILAAILVLLVLI) threads the bilayer. The Cytoplasmic segment spans residues 376 to 742 (ALKRRRSRSE…HESSMKAIYE (367 aa)). Positions 386-424 (DDPFEVNNSNNERHASDKVSVCSTTTASSKSLPDSRRVP) are disordered. Residues 406–417 (VCSTTTASSKSL) are compositionally biased toward polar residues. Residues 426–720 (TMRSAVIGLP…DVVWNLQYTI (295 aa)) enclose the Protein kinase domain.

The protein belongs to the protein kinase superfamily. Ser/Thr protein kinase family.

The protein localises to the membrane. It carries out the reaction L-seryl-[protein] + ATP = O-phospho-L-seryl-[protein] + ADP + H(+). It catalyses the reaction L-threonyl-[protein] + ATP = O-phospho-L-threonyl-[protein] + ADP + H(+). The protein is Probable LRR receptor-like serine/threonine-protein kinase At2g02780 of Arabidopsis thaliana (Mouse-ear cress).